A 121-amino-acid polypeptide reads, in one-letter code: Flagellar protein FliT (121 aa).

The interval 1-50 is required for homodimerization; the sequence is MNHAPHLYFAWQQLVEKSQLMLRLATEEQWDELIASEMAYVNAVQEIAHL. The segment at 60-98 is fliD binding; it reads MQEQLRPMLRLILDNESKVKQLLQIRMDELAKLVGQSSV.

This sequence belongs to the FliT family. In terms of assembly, homodimer. Interacts with FliD and FlhC.

It localises to the cytoplasm. Its subcellular location is the cytosol. Dual-function protein that regulates the transcription of class 2 flagellar operons and that also acts as an export chaperone for the filament-capping protein FliD. As a transcriptional regulator, acts as an anti-FlhDC factor; it directly binds FlhC, thus inhibiting the binding of the FlhC/FlhD complex to class 2 promoters, resulting in decreased expression of class 2 flagellar operons. As a chaperone, effects FliD transition to the membrane by preventing its premature polymerization, and by directing it to the export apparatus. The polypeptide is Flagellar protein FliT (Escherichia coli O139:H28 (strain E24377A / ETEC)).